Here is a 180-residue protein sequence, read N- to C-terminus: MSKFKQLYKPLLDNAQWETPLSLAIEGTAFGHWLLEPNSLSRRLQRHCDEFTVSLIEQKKIDSTMLSADERELIGDVDCLLRKVVLMGDGQPWVFARTLIPLSTLTGQESDLEQLGEMPLGFRVFTDRSARRDALEVANTGTQAQPLWARRSRLWINNKPLLVAELFLAQAPVYSKEKQC.

Substrate is bound by residues Arg82, Leu120, and Glu165.

The protein belongs to the UbiC family.

It localises to the cytoplasm. The enzyme catalyses chorismate = 4-hydroxybenzoate + pyruvate. It functions in the pathway cofactor biosynthesis; ubiquinone biosynthesis. In terms of biological role, removes the pyruvyl group from chorismate, with concomitant aromatization of the ring, to provide 4-hydroxybenzoate (4HB) for the ubiquinone pathway. This Photobacterium profundum (strain SS9) protein is Probable chorismate pyruvate-lyase.